The sequence spans 421 residues: Divalent metal cation transporter MntH (421 aa).

The next 11 membrane-spanning stretches (helical) occupy residues 27 to 47 (LGPA…ATNI), 51 to 71 (SLFD…AIFL), 100 to 120 (WFLW…EFLG), 128 to 148 (LFHI…FAIV), 160 to 180 (GIIF…LFIA), 201 to 221 (AMLI…IYLH), 248 to 268 (ILVA…VSAA), 289 to 309 (PLLG…SGFS), 337 to 357 (LVTM…LKSL), 358 to 378 (IVSQ…LLLI), and 396 to 416 (IMGV…LYLT).

The protein belongs to the NRAMP family.

The protein resides in the cell membrane. H(+)-stimulated, divalent metal cation uptake system. In Caldanaerobacter subterraneus subsp. tengcongensis (strain DSM 15242 / JCM 11007 / NBRC 100824 / MB4) (Thermoanaerobacter tengcongensis), this protein is Divalent metal cation transporter MntH.